The chain runs to 438 residues: Protein translocase subunit SecY (438 aa).

Residues 1 to 43 form a helical membrane-spanning segment; sequence MKIKPILELIPEVKRPLKGVSFKEKIQWTGLVLILYFILGTID. Residues 44-54 are Extracellular-facing; sequence IYMGGAEMPAM. An intramembrane region (helical) is located at residues 55-62; sequence FAFWQTVT. The discontinuously helical transmembrane segment at 55–83 threads the bilayer; sequence FAFWQTVTASKMGTLITLGIGPIVTAGII. An intramembrane segment occupies 63–74; that stretch reads ASKMGTLITLGI. The helical intramembrane region spans 75–83; sequence GPIVTAGII. The Cytoplasmic portion of the chain corresponds to 84–104; the sequence is MQLLVGSELISLDLSKPMNRA. Residues 105–129 form a helical membrane-spanning segment; it reads LFQGLQKLFGIFLCFLEAVMFVGAG. The Extracellular segment spans residues 130–136; it reads AFGVVNS. The chain crosses the membrane as a helical span at residues 137–161; the sequence is TLALILVLQLALGAILVIYLDEIVS. The Cytoplasmic segment spans residues 162–167; it reads RYGIGS. The helical transmembrane segment at 168–186 threads the bilayer; the sequence is GIGLFIAAGVAQTIFVGAF. Residues 187-209 are Extracellular-facing; it reads GAEGYLWKFFSAMSVGSLGIAFE. Residues 210–231 traverse the membrane as a helical segment; it reads YILPILSTLFVFLVVVYVESIR. The Cytoplasmic portion of the chain corresponds to 232 to 256; sequence VEIPLAHGRVKGAVGKYPIKFIYVS. A helical transmembrane segment spans residues 257–278; the sequence is NLPVILAAALFANIQLWGMFLD. Over 279–315 the chain is Extracellular; that stretch reads RMGYPILGQYSNGTAVSGIAYYFSTPYGISNIISDPL. Residues 316-335 traverse the membrane as a helical segment; it reads HAIFYTLMMVIFCILFGLFW. At 336 to 378 the chain is on the cytoplasmic side; the sequence is VETSGLDAKSMAKKLGNLDMAIKGFRKSQKSIEQRLKRYIKPI. A helical transmembrane segment spans residues 379–397; that stretch reads TVMGSAFVGFLAAAADFTG. Residues 398–400 are Extracellular-facing; sequence ALG. Residues 401 to 415 form a helical membrane-spanning segment; it reads GGTGVLLTVSIVYRL. Residues 416-438 lie on the Cytoplasmic side of the membrane; it reads YEQLVQEQLSELHPAVAKFVGKR.

Belongs to the SecY/SEC61-alpha family. In terms of assembly, component of the Sec protein translocase complex. Heterotrimer consisting of alpha (SecY), beta (SecG) and gamma (SecE) subunits. The heterotrimers can form oligomers, although 1 heterotrimer is thought to be able to translocate proteins. Interacts with the ribosome. May interact with SecDF, and other proteins may be involved.

It localises to the cell membrane. In terms of biological role, the central subunit of the protein translocation channel SecYEG. Consists of two halves formed by TMs 1-5 and 6-10. These two domains form a lateral gate at the front which open onto the bilayer between TMs 2 and 7, and are clamped together by SecE at the back. The channel is closed by both a pore ring composed of hydrophobic SecY resides and a short helix (helix 2A) on the extracellular side of the membrane which forms a plug. The plug probably moves laterally to allow the channel to open. The ring and the pore may move independently. In Methanococcus vannielii, this protein is Protein translocase subunit SecY.